The primary structure comprises 1138 residues: MVKLSIVLTPQFLSHDQGQLTKELQQHVKSVTCPCEYLRKVINTLADHHHRGTDFGGSPWLHVIIAFPTSYKVVITLWIVYLWVSLLKTIFWSRNGHDGSTDVQQRAWRSNRRRQEGLRSICMHTKKRVSSFRGNKIVLKDVITLRRHVETKVRAKIRKRKVTTKINHHDKINGKRKTARKQKMFQRAQELRRRAEDYHKCKIPPSARKALCNWVRMAAAEHRHSSGLPYWPYLTAETLKNRMGHQPPPPTQQHSITDNSLSLKTPPECLLTPLPPSADDNLKTPPECVLTPLPPSADDNLKTPPECVLTPLPPSADDNLKTPPECLLTPLPPSADDKLKTPPECLLTPLPPSALPSAPPSADDNLKTRAECLLHPLPPSADDNLKTPSERQLTPLPPSAPPSADDNIKTPAERLRGPLPPSADDNLKTPSERQLTPLPPSAPPSADDNIKTPAERLRGPLPPSADDNLKTPSERQLTPLPPSAPPSADDNIKTPAERLRGPLPPSADDNLKTPSERQLTPLPPSAPPSADDNIKTPAERLRGPLPPSADDNLKTPSERQLTPLPPSAPPSADDNIKTPAERLRGPLPPSADDNLKTPSERQLTPLPPSAPPSADDNIKTPAFHPQRMIISRHLPSVSSLPFHPQLHPQQMIISRYLLSVCGFRFHHQPMIISRHLPSVSSLPFHPQLHPQQMIISRHLPSVCGGRFHPQRMIISRHLPSVSSLPFHPQLHPQQMIISRHLPSVCGGRFHPQRMIISRHLPSVSSLPFHPQLHPQQMIISRHLPSVCGGRFHPQRMIISRHLPSVSSLPFHPQLHPQQMIISRHLPSVCGGRFHPQRMIISRHLPSVSSLPFHPQLHPQQMIISRHLPSVCGERLRGPLPPSADDNLKTPSERQLTPLPPSAPPSADDNIKTPAERLRGPLPPSADDNLKTPSERQLTPLPPSAPPSADDNIKTPAERLRGPLPPSADDNLKTPSERQLTPLPPSAPPSADDNIKTPAERLRGPLPPSADDNLKTPPLATQEAEAEKPRKPKRQRAAEMEPPPEPKRRRVGDVEPSRKPKRRRAADVEPSSPEPKRRRVGDVEPSRKPKRRRAADVEPSSPEPKRRRVGDVEPSRKPKRRRAADVEPSLPEPKRRRLS.

A helical transmembrane segment spans residues 63 to 87 (VIIAFPTSYKVVITLWIVYLWVSLL). 3 disordered regions span residues 241 to 263 (NRMGHQPPPPTQQHSITDNSLSL), 291 to 620 (TPLP…NIKT), and 873 to 1138 (ERLR…RRLS). Residues 252–262 (QQHSITDNSLS) are compositionally biased toward polar residues. Over residues 349–359 (PLPPSALPSAP) the composition is skewed to pro residues. Composition is skewed to basic and acidic residues over residues 406–416 (DNIKTPAERLR), 448–458 (DNIKTPAERLR), 490–500 (DNIKTPAERLR), 532–542 (DNIKTPAERLR), 574–584 (DNIKTPAERLR), 908–918 (DNIKTPAERLR), 950–960 (DNIKTPAERLR), and 992–1002 (DNIKTPAERLR).

It belongs to the NPIP family.

The protein localises to the membrane. This is Nuclear pore complex-interacting protein family member B4 (NPIPB4) from Homo sapiens (Human).